Here is a 582-residue protein sequence, read N- to C-terminus: Cryptochrome-2 (582 aa).

Residues Cys12–Leu141 form the Photolyase/cryptochrome alpha/beta domain. Residues Ser261, Gln298, His364, and Asp396–Asp398 contribute to the FAD site. The segment at Gly521–Cys559 is disordered. Positions Ala527–Ala546 are enriched in polar residues.

The protein belongs to the DNA photolyase class-1 family. In terms of assembly, component of the circadian core oscillator, which includes the CRY proteins, CLOCK or NPAS2, BMAL1 or BMAL2, CSNK1E, and the PER proteins. It depends on FAD as a cofactor. The cofactor is (6R)-5,10-methylene-5,6,7,8-tetrahydrofolate. In terms of tissue distribution, expressed in the pineal gland.

Its subcellular location is the cytoplasm. The protein localises to the nucleus. Functionally, transcriptional repressor which forms a core component of the circadian clock. The circadian clock, an internal time-keeping system, regulates various physiological processes through the generation of approximately 24 hour circadian rhythms in gene expression, which are translated into rhythms in metabolism and behavior. It is derived from the Latin roots 'circa' (about) and 'diem' (day) and acts as an important regulator of a wide array of physiological functions including metabolism, sleep, body temperature, blood pressure, endocrine, immune, cardiovascular, and renal function. Consists of two major components: the central clock, residing in the suprachiasmatic nucleus (SCN) of the brain, and the peripheral clocks that are present in nearly every tissue and organ system. Both the central and peripheral clocks can be reset by environmental cues, also known as Zeitgebers (German for 'timegivers'). The predominant Zeitgeber for the central clock is light, which is sensed by retina and signals directly to the SCN. The central clock entrains the peripheral clocks through neuronal and hormonal signals, body temperature and feeding-related cues, aligning all clocks with the external light/dark cycle. Circadian rhythms allow an organism to achieve temporal homeostasis with its environment at the molecular level by regulating gene expression to create a peak of protein expression once every 24 hours to control when a particular physiological process is most active with respect to the solar day. Transcription and translation of core clock components (CLOCK, NPAS2, BMAL1, BMAL2, PER1, PER2, PER3, CRY1 and CRY2) plays a critical role in rhythm generation, whereas delays imposed by post-translational modifications (PTMs) are important for determining the period (tau) of the rhythms (tau refers to the period of a rhythm and is the length, in time, of one complete cycle). A diurnal rhythm is synchronized with the day/night cycle, while the ultradian and infradian rhythms have a period shorter and longer than 24 hours, respectively. Disruptions in the circadian rhythms contribute to the pathology of cardiovascular diseases, cancer, metabolic syndromes and aging. A transcription/translation feedback loop (TTFL) forms the core of the molecular circadian clock mechanism. Transcription factors, CLOCK or NPAS2 and BMAL1 or BMAL2, form the positive limb of the feedback loop, act in the form of a heterodimer and activate the transcription of core clock genes and clock-controlled genes (involved in key metabolic processes), harboring E-box elements (5'-CACGTG-3') within their promoters. The core clock genes: PER1/2/3 and CRY1/2 which are transcriptional repressors form the negative limb of the feedback loop and interact with the CLOCK|NPAS2-BMAL1|BMAL2 heterodimer inhibiting its activity and thereby negatively regulating their own expression. This heterodimer also activates nuclear receptors NR1D1/2, RORA/B/G, which form a second feedback loop and which activate and repress BMAL1 transcription, respectively. CRY1 and CRY2 have redundant functions but also differential and selective contributions at least in defining the pace of the SCN circadian clock and its circadian transcriptional outputs. Less potent transcriptional repressor in cerebellum and liver than CRY1, though less effective in lengthening the period of the SCN oscillator. Seems to play a critical role in tuning SCN circadian period by opposing the action of CRY1. With CRY1, dispensable for circadian rhythm generation but necessary for the development of intercellular networks for rhythm synchrony. Represses CLOCK-BMAL1-mediated transcriptional activation. The sequence is that of Cryptochrome-2 (CRY2) from Gallus gallus (Chicken).